The primary structure comprises 270 residues: Putative F-box protein At3g24700 (270 aa).

One can recognise an F-box domain in the interval 1-45 (MLTDLPLDLESEILSRVPATSLQRLKTTCKRWYALFRDPRFVKKN).

In Arabidopsis thaliana (Mouse-ear cress), this protein is Putative F-box protein At3g24700.